Consider the following 84-residue polypeptide: Neurotoxin BM10-1-like (84 aa).

An N-terminal signal peptide occupies residues 1–21; it reads MKTLLLTLVVVTIVCLDLGYT. Cystine bridges form between Cys-24/Cys-47, Cys-27/Cys-32, Cys-40/Cys-64, Cys-68/Cys-76, and Cys-77/Cys-82.

It belongs to the three-finger toxin family. Ancestral subfamily. Orphan group IV sub-subfamily. Expressed by the venom gland.

It localises to the secreted. In terms of biological role, binds and inhibits muscular and neuronal nicotinic acetylcholine receptors (nAChR). In Bungarus multicinctus (Many-banded krait), this protein is Neurotoxin BM10-1-like.